A 151-amino-acid chain; its full sequence is 3-dehydroquinate dehydratase (151 aa).

The active-site Proton acceptor is the Tyr24. The substrate site is built by Asn76, His82, and Asp89. Catalysis depends on His102, which acts as the Proton donor. Residues 103–104 (VS) and Arg113 contribute to the substrate site.

It belongs to the type-II 3-dehydroquinase family. In terms of assembly, homododecamer.

The catalysed reaction is 3-dehydroquinate = 3-dehydroshikimate + H2O. The protein operates within metabolic intermediate biosynthesis; chorismate biosynthesis; chorismate from D-erythrose 4-phosphate and phosphoenolpyruvate: step 3/7. Catalyzes a trans-dehydration via an enolate intermediate. This is 3-dehydroquinate dehydratase from Rhodopseudomonas palustris (strain HaA2).